Consider the following 183-residue polypeptide: MNFKIYETKIREEFELVLKWMHNEFIKLRTGRATPAILDGILVDYYGSMTPINQLANISVPEPRVLAIKPYDRSSIKDVASAINASNLGVNPQVDVDIIRLTFAAPTEEVRKNLAKKAKQVGEEAKIRVRHIRQEAQDLFKKNSSTVEDDKKFFQTELDNLTKELNKEIEAVVSHKEKDIMTV.

The protein belongs to the RRF family.

It is found in the cytoplasm. Its function is as follows. Responsible for the release of ribosomes from messenger RNA at the termination of protein biosynthesis. May increase the efficiency of translation by recycling ribosomes from one round of translation to another. This chain is Ribosome-recycling factor, found in Ureaplasma urealyticum serovar 10 (strain ATCC 33699 / Western).